Reading from the N-terminus, the 527-residue chain is Peptide chain release factor 3 (527 aa).

Positions 9–277 constitute a tr-type G domain; that stretch reads AKRRTFAIIS…CIVDWAPQPL (269 aa). GTP-binding positions include 18–25, 86–90, and 140–143; these read SHPDAGKT, DTPGH, and NKLD.

Belongs to the TRAFAC class translation factor GTPase superfamily. Classic translation factor GTPase family. PrfC subfamily.

Its subcellular location is the cytoplasm. Functionally, increases the formation of ribosomal termination complexes and stimulates activities of RF-1 and RF-2. It binds guanine nucleotides and has strong preference for UGA stop codons. It may interact directly with the ribosome. The stimulation of RF-1 and RF-2 is significantly reduced by GTP and GDP, but not by GMP. The sequence is that of Peptide chain release factor 3 from Pseudomonas paraeruginosa (strain DSM 24068 / PA7) (Pseudomonas aeruginosa (strain PA7)).